Reading from the N-terminus, the 98-residue chain is NADH-ubiquinone oxidoreductase chain 4L (98 aa).

3 consecutive transmembrane segments (helical) span residues 1-21 (MTMV…GLLM), 29-49 (SLLC…VTIL), and 61-81 (IILL…LVMV).

The protein belongs to the complex I subunit 4L family. In terms of assembly, core subunit of respiratory chain NADH dehydrogenase (Complex I) which is composed of 45 different subunits.

The protein localises to the mitochondrion inner membrane. It catalyses the reaction a ubiquinone + NADH + 5 H(+)(in) = a ubiquinol + NAD(+) + 4 H(+)(out). Core subunit of the mitochondrial membrane respiratory chain NADH dehydrogenase (Complex I) which catalyzes electron transfer from NADH through the respiratory chain, using ubiquinone as an electron acceptor. Part of the enzyme membrane arm which is embedded in the lipid bilayer and involved in proton translocation. This chain is NADH-ubiquinone oxidoreductase chain 4L (MT-ND4L), found in Mirounga angustirostris (Northern elephant seal).